Here is a 581-residue protein sequence, read N- to C-terminus: Meiotic PUF family protein 1 (581 aa).

The 356-residue stretch at 225–580 (FPNGTTEPFE…RIAALVEKSK (356 aa)) folds into the PUM-HD domain. Pumilio repeat units lie at residues 291–326 (TILPFSVTLMKNKFGNFLIQKCFEYSTEAQLQSFSY), 327–362 (FLKKHVKELSIDAFGSHVLQKSLEIYPERFTNNLIE), 363–398 (ELIECLPATLMQRHSCHVWQKFFETRRKSLVDGIFD), 403–438 (KMQGKWLQVSVSEMGSLVVQTIFENCKEKDKRTCLD), 439–474 (EIINNMDQIICGQWGNWVIQHIIEHGSEPDKQRILN), 475–510 (SLLKEVESYSTNRYASKVVERALRVCHVTFFDRYVK), 518–554 (ELPTIFLQEIASNQYGNYIVQYLLQVATPSQINLMAE), and 555–581 (HLKKHMVSLRGHKYGQRIAALVEKSKS).

In terms of biological role, RNA-binding protein essential for meiotic progression. This Schizosaccharomyces pombe (strain 972 / ATCC 24843) (Fission yeast) protein is Meiotic PUF family protein 1 (mpf1).